The sequence spans 440 residues: MTFFNDVEKVQYEGPRSTNPYAFKYYNPEEIVAGKTMAEHLRFSIAYWHTFVGDGSDPFGVGTMQRPWDQYSGMDLAKARVEAAFEFFEKLNVPYFCFHDVDVAPEGETLADTYKNLDEIVLMIKDYMKTSKTKLLWNTANMFTHPRWIHGAATSPNADVYAYAAAKVKKGLEIGKELGAENYVFWGGREGYETLLNTNMKLELDNLARFFHMAVDYAKEIGFDAQFLIEPKPKEPTKHQYDFDVATGIAFLKTHGLDEHFKFNIEANHATLAGHTFEHELHLARIHDMLGSVDANQGDTLLGWDTDEFPTDLYTTTLAMYEILKNDGLGKGGLNFDAKVRRGSFEANDLFHAHIAGMDSFAIGLKVANQLLEDRVLEDVIDNRYKSYQSGIGQKIANNDTNLKELEAYALSLGEIKHSSGQQERIKATLNQYLLRVNEY.

Residues H99 and D102 contribute to the active site. Residues E230, E266, H269, D294, D305, D307, and D337 each coordinate Mg(2+).

This sequence belongs to the xylose isomerase family. In terms of assembly, homotetramer. Requires Mg(2+) as cofactor.

Its subcellular location is the cytoplasm. It carries out the reaction alpha-D-xylose = alpha-D-xylulofuranose. The chain is Xylose isomerase from Halalkalibacterium halodurans (strain ATCC BAA-125 / DSM 18197 / FERM 7344 / JCM 9153 / C-125) (Bacillus halodurans).